Reading from the N-terminus, the 550-residue chain is Hydroxylamine reductase (550 aa).

[2Fe-2S] cluster contacts are provided by Cys3, Cys6, Cys18, and Cys25. Positions 249, 273, 317, 405, 433, 458, 492, and 494 each coordinate hybrid [4Fe-2O-2S] cluster. Residue Cys405 is modified to Cysteine persulfide.

It belongs to the HCP family. It depends on [2Fe-2S] cluster as a cofactor. Requires hybrid [4Fe-2O-2S] cluster as cofactor.

It localises to the cytoplasm. It catalyses the reaction A + NH4(+) + H2O = hydroxylamine + AH2 + H(+). Functionally, catalyzes the reduction of hydroxylamine to form NH(3) and H(2)O. The chain is Hydroxylamine reductase from Yersinia pseudotuberculosis serotype O:1b (strain IP 31758).